A 293-amino-acid polypeptide reads, in one-letter code: Succinate--CoA ligase [ADP-forming] subunit alpha (293 aa).

CoA-binding positions include 21–24 (TGKQ), lysine 47, and 99–101 (ITE). Tyrosine 162 is a binding site for substrate. Histidine 249 (tele-phosphohistidine intermediate) is an active-site residue.

The protein belongs to the succinate/malate CoA ligase alpha subunit family. Heterotetramer of two alpha and two beta subunits.

It catalyses the reaction succinate + ATP + CoA = succinyl-CoA + ADP + phosphate. The enzyme catalyses GTP + succinate + CoA = succinyl-CoA + GDP + phosphate. It participates in carbohydrate metabolism; tricarboxylic acid cycle; succinate from succinyl-CoA (ligase route): step 1/1. Functionally, succinyl-CoA synthetase functions in the citric acid cycle (TCA), coupling the hydrolysis of succinyl-CoA to the synthesis of either ATP or GTP and thus represents the only step of substrate-level phosphorylation in the TCA. The alpha subunit of the enzyme binds the substrates coenzyme A and phosphate, while succinate binding and nucleotide specificity is provided by the beta subunit. The chain is Succinate--CoA ligase [ADP-forming] subunit alpha from Methanothermobacter thermautotrophicus (strain ATCC 29096 / DSM 1053 / JCM 10044 / NBRC 100330 / Delta H) (Methanobacterium thermoautotrophicum).